The chain runs to 267 residues: MNQATALMAPSDARLKFRNGLVTPTSGWSDGYTQANLIAVAADYADEFIEFCRLNPKACPVIDIIPAGRHESVLAAGSDIRSDVPAYRIWVDGELADEVTDATSVWRDDMVGVLIGCSFTFEAALASEGIPLRHTETGRNVPMYRTNIECTPAGRIHGPMVVSMRPMLPGLVDTAIRVTSEVPKVHGSPVHVGSPEDLGIADINRPDFGDAVEIRPGEVPVFWACGVTPQSAVMASRPSFAISHAPGHMFITDVPESNYREPAGVSL.

This sequence belongs to the D-glutamate cyclase family.

The polypeptide is Putative hydro-lyase Arth_3576 (Arthrobacter sp. (strain FB24)).